The sequence spans 161 residues: Small ribosomal subunit protein uS9 (161 aa).

Belongs to the universal ribosomal protein uS9 family.

The polypeptide is Small ribosomal subunit protein uS9 (Rickettsia typhi (strain ATCC VR-144 / Wilmington)).